Here is a 173-residue protein sequence, read N- to C-terminus: Shikimate kinase 2 (173 aa).

An ATP-binding site is contributed by 12–17 (GCGKTT). Residues threonine 16 and aspartate 32 each contribute to the Mg(2+) site. Substrate is bound by residues aspartate 34, arginine 58, and glycine 79. The segment at 112–126 (EENPQDNQRPTLTGR) is LID domain. Position 120 (arginine 120) interacts with ATP. Arginine 139 is a substrate binding site. Residue glutamine 155 coordinates ATP.

Belongs to the shikimate kinase family. AroL subfamily. In terms of assembly, monomer. It depends on Mg(2+) as a cofactor.

The protein localises to the cytoplasm. It carries out the reaction shikimate + ATP = 3-phosphoshikimate + ADP + H(+). It functions in the pathway metabolic intermediate biosynthesis; chorismate biosynthesis; chorismate from D-erythrose 4-phosphate and phosphoenolpyruvate: step 5/7. In terms of biological role, catalyzes the specific phosphorylation of the 3-hydroxyl group of shikimic acid using ATP as a cosubstrate. This Pectobacterium atrosepticum (strain SCRI 1043 / ATCC BAA-672) (Erwinia carotovora subsp. atroseptica) protein is Shikimate kinase 2.